The sequence spans 287 residues: Inactive phospholipid phosphatase 7 (287 aa).

The disordered stretch occupies residues 1-75 (MPANQTRSRA…NNKDKKELPE (75 aa)). Over 1–120 (MPANQTRSRA…SSSWGSVRSM (120 aa)) the chain is Cytoplasmic. Residues 31-40 (SGGGGGGGES) are compositionally biased toward gly residues. A compositionally biased stretch (low complexity) spans 49–65 (QRQQQNQQQQGDNPQPE). Residues 121 to 141 (VKLLALTGHGIPWVFGTIVCL) form a helical membrane-spanning segment. Residues 142 to 146 (MRSNT) are Extracellular-facing. The helical transmembrane segment at 147–167 (LAGQEVLVNLLLALLLDVMTV) threads the bilayer. The Cytoplasmic segment spans residues 168 to 215 (SGMQKLVKRKGPWEMPPGFFDYLAMDIYSFPAAHASRAVMVSKFLLAH). A helical membrane pass occupies residues 216 to 236 (LVLAVPLRILLVLWAILVGIS). The Extracellular portion of the chain corresponds to 237–247 (RVLLGRHHLTD). Residues 248-268 (VGCGFALGFLHYSLVEMVWLS) traverse the membrane as a helical segment. The Cytoplasmic portion of the chain corresponds to 269-287 (SNTCQTLISIGTFNWSPLY).

This sequence belongs to the PA-phosphatase related phosphoesterase family.

The protein resides in the nucleus envelope. Its subcellular location is the endoplasmic reticulum membrane. The protein localises to the membrane. Its function is as follows. Plays a role as negative regulator of myoblast differentiation, in part through effects on MTOR signaling. Has no detectable enzymatic activity. The polypeptide is Inactive phospholipid phosphatase 7 (Danio rerio (Zebrafish)).